The primary structure comprises 1061 residues: RecBCD enzyme subunit RecC (1061 aa).

This sequence belongs to the RecC family. In terms of assembly, heterotrimer of RecB, RecC and RecD. All subunits contribute to DNA-binding.

A helicase/nuclease that prepares dsDNA breaks (DSB) for recombinational DNA repair. Binds to DSBs and unwinds DNA via a highly rapid and processive ATP-dependent bidirectional helicase activity. Unwinds dsDNA until it encounters a Chi (crossover hotspot instigator) sequence from the 3' direction. Cuts ssDNA a few nucleotides 3' to the Chi site. The properties and activities of the enzyme are changed at Chi. The Chi-altered holoenzyme produces a long 3'-ssDNA overhang and facilitates RecA-binding to the ssDNA for homologous DNA recombination and repair. Holoenzyme degrades any linearized DNA that is unable to undergo homologous recombination. In the holoenzyme this subunit recognizes the wild-type Chi sequence, and when added to isolated RecB increases its ATP-dependent helicase processivity. The chain is RecBCD enzyme subunit RecC from Buchnera aphidicola subsp. Schizaphis graminum (strain Sg).